A 170-amino-acid chain; its full sequence is RNA pyrophosphohydrolase (170 aa).

Positions 8-151 (PYRPNVGIAL…KKALYAELIP (144 aa)) constitute a Nudix hydrolase domain. Positions 42-63 (GGIDEGETPQVAALREMGEEIG) match the Nudix box motif.

This sequence belongs to the Nudix hydrolase family. RppH subfamily. It depends on a divalent metal cation as a cofactor.

Functionally, accelerates the degradation of transcripts by removing pyrophosphate from the 5'-end of triphosphorylated RNA, leading to a more labile monophosphorylated state that can stimulate subsequent ribonuclease cleavage. In Gluconobacter oxydans (strain 621H) (Gluconobacter suboxydans), this protein is RNA pyrophosphohydrolase.